The primary structure comprises 306 residues: Aspartate carbamoyltransferase catalytic subunit (306 aa).

Residues R54 and T55 each coordinate carbamoyl phosphate. K83 is a binding site for L-aspartate. The carbamoyl phosphate site is built by R104, H132, and Q135. L-aspartate is bound by residues R165 and R227. 2 residues coordinate carbamoyl phosphate: L266 and P267.

This sequence belongs to the aspartate/ornithine carbamoyltransferase superfamily. ATCase family. Heterododecamer (2C3:3R2) of six catalytic PyrB chains organized as two trimers (C3), and six regulatory PyrI chains organized as three dimers (R2).

The catalysed reaction is carbamoyl phosphate + L-aspartate = N-carbamoyl-L-aspartate + phosphate + H(+). The protein operates within pyrimidine metabolism; UMP biosynthesis via de novo pathway; (S)-dihydroorotate from bicarbonate: step 2/3. Catalyzes the condensation of carbamoyl phosphate and aspartate to form carbamoyl aspartate and inorganic phosphate, the committed step in the de novo pyrimidine nucleotide biosynthesis pathway. This is Aspartate carbamoyltransferase catalytic subunit from Clostridium novyi (strain NT).